We begin with the raw amino-acid sequence, 293 residues long: MSEIGTGFPFDPHYVEVLGERMHYVDVGPRDGTPVLFLHGNPTSSYLWRNIIPHVAPSHRCIAPDLIGMGKSDKPDLDYFFDDHVRYLDAFIEALGLEEVVLVIHDWGSALGFHWAKRNPERVKGIACMEFIRPIPTWDEWPEFARETFQAFRTADVGRELIIDQNAFIEGALPKCVVRPLTEVEMDHYREPFLKPVDREPLWRFPNELPIAGEPANIVALVEAYMNWLHQSPVPKLLFWGTPGVLIPPAEAARLAESLPNCKTVDIGPGLHYLQEDNPDLIGSEIARWLPAL.

Residues 34 to 158 (PVLFLHGNPT…FQAFRTADVG (125 aa)) enclose the AB hydrolase-1 domain. Catalysis depends on Asp-106, which acts as the Nucleophile. The Proton donor role is filled by Glu-130. His-272 acts as the Proton acceptor in catalysis.

This sequence belongs to the haloalkane dehalogenase family. Type 2 subfamily. In terms of assembly, monomer.

The enzyme catalyses 1-haloalkane + H2O = a halide anion + a primary alcohol + H(+). It functions in the pathway xenobiotic degradation; haloalkane degradation. Its pathway is xenobiotic degradation; 1,3-dichloropropene degradation. In terms of biological role, catalyzes hydrolytic cleavage of carbon-halogen bonds in halogenated aliphatic compounds, leading to the formation of the corresponding primary alcohols, halide ions and protons. Has a broad substrate specificity, as it is able to dehalogenate mono- and di- chlorinated and brominated alkanes (up to at least C10), and the two isomers of 1,3-dichloropropene to 3-chloroallyl alcohol; the highest activity was found with 1,2-dibromoethane, while no activity was observed with the analog 1,2-dichloroethane. This chain is Haloalkane dehalogenase (dhaA), found in Pseudomonas pavonaceae.